The following is a 174-amino-acid chain: Co-chaperone protein HscB homolog (174 aa).

In terms of domain architecture, J spans 2–74; sequence NYFELFKFSP…IRRAEHMLSL (73 aa).

It belongs to the HscB family. Interacts with HscA and stimulates its ATPase activity.

Co-chaperone involved in the maturation of iron-sulfur cluster-containing proteins. Seems to help targeting proteins to be folded toward HscA. The polypeptide is Co-chaperone protein HscB homolog (Shewanella baltica (strain OS185)).